The sequence spans 505 residues: MPPSAEFARSTSTNEAAPIRFDNTYARLPEAFYQRVEPATAAAPRLLRVNDALARQLRIDPQFLESPEGVAVLSGNVIAPGSEPIAQAYAGHQFGDFVPQLGDGRAILLGEVVDVAGKRYDLQLKGSGRTRFSRGGDGRAALGPVIREYIVSEAMAALGIPTTRSLAAVLTGENVMRERVLPGGVLTRVASSHLRVGTFQYFAARGDIENLRVLADYAIERHYPEARSAEDPYRAFYDAVVAALARLAARWMLVGFIHGVLNTDNTAIGGETIDYGPCAFMDAYHPDKVFSSIDQFGRYAFANQPAVIRWNLTRFAETLLPLMADGTDKAIEAANASIARFKDQYQDAYIRGFRQKLGLALEMEGDLELAADLLARMAENQADFTLTFRALCEAAADPKGNAGVRALFANPSAFDEWAARWRERLSLEERSAEARRTAMLAASPVFIPRNHRIEAAIQDAEAGHFDKFHELVEVLAHPYDDQPQFADYGKPPAPGEEVQQTFCGT.

Residues Gly102, Gly104, Arg105, Lys125, Asp137, Gly138, Arg188, and Arg195 each contribute to the ATP site. Asp264 acts as the Proton acceptor in catalysis. Mg(2+)-binding residues include Asn265 and Asp274. Asp274 provides a ligand contact to ATP. The disordered stretch occupies residues 485–505 (FADYGKPPAPGEEVQQTFCGT).

This sequence belongs to the SELO family. It depends on Mg(2+) as a cofactor. Mn(2+) is required as a cofactor.

It catalyses the reaction L-seryl-[protein] + ATP = 3-O-(5'-adenylyl)-L-seryl-[protein] + diphosphate. The catalysed reaction is L-threonyl-[protein] + ATP = 3-O-(5'-adenylyl)-L-threonyl-[protein] + diphosphate. It carries out the reaction L-tyrosyl-[protein] + ATP = O-(5'-adenylyl)-L-tyrosyl-[protein] + diphosphate. The enzyme catalyses L-histidyl-[protein] + UTP = N(tele)-(5'-uridylyl)-L-histidyl-[protein] + diphosphate. It catalyses the reaction L-seryl-[protein] + UTP = O-(5'-uridylyl)-L-seryl-[protein] + diphosphate. The catalysed reaction is L-tyrosyl-[protein] + UTP = O-(5'-uridylyl)-L-tyrosyl-[protein] + diphosphate. Nucleotidyltransferase involved in the post-translational modification of proteins. It can catalyze the addition of adenosine monophosphate (AMP) or uridine monophosphate (UMP) to a protein, resulting in modifications known as AMPylation and UMPylation. This chain is Protein nucleotidyltransferase YdiU, found in Nitrobacter hamburgensis (strain DSM 10229 / NCIMB 13809 / X14).